A 285-amino-acid chain; its full sequence is Pantothenate synthetase (285 aa).

30–37 contributes to the ATP binding site; it reads MGNLHDGH. H37 serves as the catalytic Proton donor. Q61 contacts (R)-pantoate. Beta-alanine is bound at residue Q61. An ATP-binding site is contributed by 149–152; sequence GEKD. Q155 serves as a coordination point for (R)-pantoate. ATP contacts are provided by residues I178 and 186 to 189; that span reads LSSR.

Belongs to the pantothenate synthetase family. In terms of assembly, homodimer.

Its subcellular location is the cytoplasm. The enzyme catalyses (R)-pantoate + beta-alanine + ATP = (R)-pantothenate + AMP + diphosphate + H(+). The protein operates within cofactor biosynthesis; (R)-pantothenate biosynthesis; (R)-pantothenate from (R)-pantoate and beta-alanine: step 1/1. In terms of biological role, catalyzes the condensation of pantoate with beta-alanine in an ATP-dependent reaction via a pantoyl-adenylate intermediate. The protein is Pantothenate synthetase of Buchnera aphidicola subsp. Acyrthosiphon pisum (strain Tuc7).